A 316-amino-acid chain; its full sequence is Methionyl-tRNA formyltransferase (316 aa).

109–112 (SLLP) serves as a coordination point for (6S)-5,6,7,8-tetrahydrofolate.

This sequence belongs to the Fmt family.

The catalysed reaction is L-methionyl-tRNA(fMet) + (6R)-10-formyltetrahydrofolate = N-formyl-L-methionyl-tRNA(fMet) + (6S)-5,6,7,8-tetrahydrofolate + H(+). Attaches a formyl group to the free amino group of methionyl-tRNA(fMet). The formyl group appears to play a dual role in the initiator identity of N-formylmethionyl-tRNA by promoting its recognition by IF2 and preventing the misappropriation of this tRNA by the elongation apparatus. This chain is Methionyl-tRNA formyltransferase, found in Idiomarina loihiensis (strain ATCC BAA-735 / DSM 15497 / L2-TR).